Consider the following 103-residue polypeptide: Small ribosomal subunit protein uS10 (103 aa).

This sequence belongs to the universal ribosomal protein uS10 family. As to quaternary structure, part of the 30S ribosomal subunit.

Functionally, involved in the binding of tRNA to the ribosomes. This chain is Small ribosomal subunit protein uS10, found in Syntrophobacter fumaroxidans (strain DSM 10017 / MPOB).